The primary structure comprises 218 residues: Pyridoxine/pyridoxamine 5'-phosphate oxidase (218 aa).

Residues 14 to 17 (RREY) and lysine 72 each bind substrate. Residues 67 to 72 (RIVLLK), 82 to 83 (YT), arginine 88, lysine 89, and glutamine 111 contribute to the FMN site. Tyrosine 129, arginine 133, and serine 137 together coordinate substrate. FMN contacts are provided by residues 146–147 (QS) and tryptophan 191. 197-199 (RLH) contributes to the substrate binding site. Arginine 201 is a binding site for FMN.

The protein belongs to the pyridoxamine 5'-phosphate oxidase family. Homodimer. Requires FMN as cofactor.

It catalyses the reaction pyridoxamine 5'-phosphate + O2 + H2O = pyridoxal 5'-phosphate + H2O2 + NH4(+). The catalysed reaction is pyridoxine 5'-phosphate + O2 = pyridoxal 5'-phosphate + H2O2. It functions in the pathway cofactor metabolism; pyridoxal 5'-phosphate salvage; pyridoxal 5'-phosphate from pyridoxamine 5'-phosphate: step 1/1. The protein operates within cofactor metabolism; pyridoxal 5'-phosphate salvage; pyridoxal 5'-phosphate from pyridoxine 5'-phosphate: step 1/1. Its function is as follows. Catalyzes the oxidation of either pyridoxine 5'-phosphate (PNP) or pyridoxamine 5'-phosphate (PMP) into pyridoxal 5'-phosphate (PLP). The sequence is that of Pyridoxine/pyridoxamine 5'-phosphate oxidase from Salmonella typhi.